We begin with the raw amino-acid sequence, 209 residues long: Small ribosomal subunit protein uS4 (209 aa).

The S4 RNA-binding domain occupies 99 to 161; the sequence is CRLDNIAFRL…SSKLVVVEMG (63 aa).

Belongs to the universal ribosomal protein uS4 family. As to quaternary structure, part of the 30S ribosomal subunit. Contacts protein S5. The interaction surface between S4 and S5 is involved in control of translational fidelity.

Functionally, one of the primary rRNA binding proteins, it binds directly to 16S rRNA where it nucleates assembly of the body of the 30S subunit. Its function is as follows. With S5 and S12 plays an important role in translational accuracy. In Acidobacterium capsulatum (strain ATCC 51196 / DSM 11244 / BCRC 80197 / JCM 7670 / NBRC 15755 / NCIMB 13165 / 161), this protein is Small ribosomal subunit protein uS4.